The primary structure comprises 244 residues: Transcriptional activator protein Anr (244 aa).

Residue 21 to 149 (APLCLPLSLN…RVMSREIRDD (129 aa)) coordinates a nucleoside 3',5'-cyclic phosphate. Positions 159 to 232 (KTADERIATF…GKEVHILDPI (74 aa)) constitute an HTH crp-type domain. Positions 192-211 (RNEIGNYLGLAVETVSRVFT) form a DNA-binding region, H-T-H motif.

Functionally, transcriptional activator of anaerobic gene expression. Regulates the expression of the components of the hydrogen cyanide synthase (HcnABC) in a positive manner. May also act as an iron sensor. In Pseudomonas protegens (strain DSM 19095 / LMG 27888 / CFBP 6595 / CHA0), this protein is Transcriptional activator protein Anr.